Reading from the N-terminus, the 434-residue chain is Trigger factor (434 aa).

One can recognise a PPIase FKBP-type domain in the interval 161–246 (EDRVTIDFTG…LKKVEERELP (86 aa)).

This sequence belongs to the FKBP-type PPIase family. Tig subfamily.

The protein localises to the cytoplasm. It catalyses the reaction [protein]-peptidylproline (omega=180) = [protein]-peptidylproline (omega=0). Involved in protein export. Acts as a chaperone by maintaining the newly synthesized protein in an open conformation. Functions as a peptidyl-prolyl cis-trans isomerase. The polypeptide is Trigger factor (Pectobacterium carotovorum subsp. carotovorum (strain PC1)).